A 78-amino-acid chain; its full sequence is Large ribosomal subunit protein bL28 (78 aa).

The disordered stretch occupies residues 1 to 23; sequence MSRVCQVTGKRPMVGNNRSHAKN.

It belongs to the bacterial ribosomal protein bL28 family.

In Shewanella pealeana (strain ATCC 700345 / ANG-SQ1), this protein is Large ribosomal subunit protein bL28.